Here is a 151-residue protein sequence, read N- to C-terminus: UPF0178 protein PFL_5989 (151 aa).

This sequence belongs to the UPF0178 family.

This is UPF0178 protein PFL_5989 from Pseudomonas fluorescens (strain ATCC BAA-477 / NRRL B-23932 / Pf-5).